The following is a 172-amino-acid chain: Large ribosomal subunit protein uL10 (172 aa).

This sequence belongs to the universal ribosomal protein uL10 family. In terms of assembly, part of the ribosomal stalk of the 50S ribosomal subunit. The N-terminus interacts with L11 and the large rRNA to form the base of the stalk. The C-terminus forms an elongated spine to which L12 dimers bind in a sequential fashion forming a multimeric L10(L12)X complex.

Its function is as follows. Forms part of the ribosomal stalk, playing a central role in the interaction of the ribosome with GTP-bound translation factors. This is Large ribosomal subunit protein uL10 from Caulobacter sp. (strain K31).